We begin with the raw amino-acid sequence, 166 residues long: Probable RNA-binding protein EIF1AD (166 aa).

In terms of domain architecture, S1-like spans 5 to 89 (TKRKHVVKEV…VKAEISFVLC (85 aa)). Residues 6 to 12 (KRKHVVK) carry the Nuclear localization signal motif. A Phosphothreonine modification is found at threonine 33. The Nuclear localization signal signature appears at 56–65 (KYRKNIWIKR). The disordered stretch occupies residues 114-166 (NNNRNRQTQPELPAEPQLSGEESSSEDDSDLFVNTNRRQYRESEEESEEEEAA). Residues serine 132, serine 136, serine 137, serine 138, serine 156, and serine 160 each carry the phosphoserine modification. Over residues 156–166 (SEEESEEEEAA) the composition is skewed to acidic residues.

It belongs to the EIF1AD family. As to quaternary structure, interacts with GAPDH and STAT1.

The protein resides in the nucleus. Its function is as follows. Plays a role into cellular response to oxidative stress. Decreases cell proliferation. This is Probable RNA-binding protein EIF1AD (EIF1AD) from Pongo abelii (Sumatran orangutan).